The following is a 169-amino-acid chain: Ribosome maturation factor RimP (169 aa).

It belongs to the RimP family.

The protein localises to the cytoplasm. In terms of biological role, required for maturation of 30S ribosomal subunits. This Pseudomonas putida (strain ATCC 700007 / DSM 6899 / JCM 31910 / BCRC 17059 / LMG 24140 / F1) protein is Ribosome maturation factor RimP.